Here is a 365-residue protein sequence, read N- to C-terminus: Cobalt-precorrin-5B C(1)-methyltransferase (365 aa).

This sequence belongs to the CbiD family.

It catalyses the reaction Co-precorrin-5B + S-adenosyl-L-methionine = Co-precorrin-6A + S-adenosyl-L-homocysteine. Its pathway is cofactor biosynthesis; adenosylcobalamin biosynthesis; cob(II)yrinate a,c-diamide from sirohydrochlorin (anaerobic route): step 6/10. In terms of biological role, catalyzes the methylation of C-1 in cobalt-precorrin-5B to form cobalt-precorrin-6A. This chain is Cobalt-precorrin-5B C(1)-methyltransferase, found in Clostridium perfringens (strain ATCC 13124 / DSM 756 / JCM 1290 / NCIMB 6125 / NCTC 8237 / Type A).